A 255-amino-acid polypeptide reads, in one-letter code: 5-oxoprolinase subunit A (255 aa).

The protein belongs to the LamB/PxpA family. As to quaternary structure, forms a complex composed of PxpA, PxpB and PxpC.

It carries out the reaction 5-oxo-L-proline + ATP + 2 H2O = L-glutamate + ADP + phosphate + H(+). Functionally, catalyzes the cleavage of 5-oxoproline to form L-glutamate coupled to the hydrolysis of ATP to ADP and inorganic phosphate. The protein is 5-oxoprolinase subunit A of Rhodopseudomonas palustris (strain BisA53).